The sequence spans 65 residues: UPF0337 protein BCE_1081 (65 aa).

The segment at 1–28 is disordered; sequence MSGGLKEQITGKVEKTKGQVKEGIGEVT. A compositionally biased stretch (basic and acidic residues) spans 12 to 28; sequence KVEKTKGQVKEGIGEVT.

Belongs to the UPF0337 (CsbD) family.

This chain is UPF0337 protein BCE_1081, found in Bacillus cereus (strain ATCC 10987 / NRS 248).